Consider the following 347-residue polypeptide: NADH-ubiquinone oxidoreductase chain 2 (347 aa).

The next 10 helical transmembrane spans lie at 13-33 (IILGTSIVITSSHWLTVWIGF), 59-79 (YFLIQATASMLLMLAVTINLL), 84-104 (WAVSNMIDPLALTIMTLALAM), 111-131 (FHFWVPEVTQGVPLLSGLILL), 149-169 (IDPTLILTMSILSVLVGGWGG), 178-198 (IMAYSSISHMGWMTAILIYNP), 201-221 (TILNLLLYIMMTSTTFILLII), 240-260 (IAIIILTTMLSLGGLPPLTGF), 276-296 (IALSLFMAMAALLNLYFYTRL), and 326-346 (LSPLIIISTMILPLTPTMSAL).

Belongs to the complex I subunit 2 family. In terms of assembly, core subunit of respiratory chain NADH dehydrogenase (Complex I) which is composed of 45 different subunits. Interacts with TMEM242.

The protein resides in the mitochondrion inner membrane. It carries out the reaction a ubiquinone + NADH + 5 H(+)(in) = a ubiquinol + NAD(+) + 4 H(+)(out). Core subunit of the mitochondrial membrane respiratory chain NADH dehydrogenase (Complex I) that is believed to belong to the minimal assembly required for catalysis. Complex I functions in the transfer of electrons from NADH to the respiratory chain. The immediate electron acceptor for the enzyme is believed to be ubiquinone. The sequence is that of NADH-ubiquinone oxidoreductase chain 2 from Chrotopterus auritus (Peters's woolly false vampire bat).